The chain runs to 345 residues: NADH-quinone oxidoreductase subunit H (345 aa).

8 consecutive transmembrane segments (helical) span residues Val-13–Leu-33, Phe-84–Phe-104, Val-115–Gly-135, Leu-161–Val-181, Phe-190–Leu-210, Tyr-248–Ser-268, Val-277–Ile-297, and Leu-309–Ala-329.

It belongs to the complex I subunit 1 family. As to quaternary structure, NDH-1 is composed of 14 different subunits. Subunits NuoA, H, J, K, L, M, N constitute the membrane sector of the complex.

It localises to the cell inner membrane. It carries out the reaction a quinone + NADH + 5 H(+)(in) = a quinol + NAD(+) + 4 H(+)(out). Its function is as follows. NDH-1 shuttles electrons from NADH, via FMN and iron-sulfur (Fe-S) centers, to quinones in the respiratory chain. The immediate electron acceptor for the enzyme in this species is believed to be ubiquinone. Couples the redox reaction to proton translocation (for every two electrons transferred, four hydrogen ions are translocated across the cytoplasmic membrane), and thus conserves the redox energy in a proton gradient. This subunit may bind ubiquinone. The sequence is that of NADH-quinone oxidoreductase subunit H from Roseobacter denitrificans (strain ATCC 33942 / OCh 114) (Erythrobacter sp. (strain OCh 114)).